A 715-amino-acid polypeptide reads, in one-letter code: Protein DENND6 homolog (715 aa).

A coiled-coil region spans residues 13–58 (MIFKEEEIKKQQILLEKEEKEKQEQQQKKLNKDNIFKLEEEGKKLE). One can recognise a uDENN domain in the interval 96–273 (NSFCIINFDL…VKQHQLGGGS (178 aa)). Disordered stretches follow at residues 269 to 296 (LGGGSGGGLSSSPSSSSGGGNIPTSNTT) and 392 to 416 (SGTRPDDSNNNNNQDDSEYNNNNNN). The region spanning 299–476 (SPSIWSEMKL…KDLLTRHVLD (178 aa)) is the cDENN domain. The span at 399 to 416 (SNNNNNQDDSEYNNNNNN) shows a compositional bias: low complexity. Residues 478–600 (KEKILSEYKP…KQWLDDKRAQ (123 aa)) form the dDENN domain.

Belongs to the DENND6 family.

The protein is Protein DENND6 homolog of Dictyostelium discoideum (Social amoeba).